The primary structure comprises 54 residues: MASKKGNRIVIKLKSTESGHTYTTEKNRRNDPSRLELRKYDPIVRRHVLYRETK.

The protein belongs to the bacterial ribosomal protein bL33 family.

This is Large ribosomal subunit protein bL33 from Chloroflexus aurantiacus (strain ATCC 29366 / DSM 635 / J-10-fl).